Here is a 202-residue protein sequence, read N- to C-terminus: Securin (202 aa).

A disordered region spans residues 36 to 55 (DGRSQVSTPHVGKMFDAPPA). A D-box motif is present at residues 61 to 64 (RKAL). 2 short sequence motifs (TEK-box) span residues 71 to 73 (TEK) and 94 to 96 (TEK). The SH3-binding signature appears at 163–173 (PPSPLKMPPLL). A Phosphoserine; by CDK1 modification is found at serine 165.

The protein belongs to the securin family. Interacts with RPS10 and DNAJA1. Interacts with the caspase-like ESPL1, and prevents its protease activity probably by covering its active site. Interacts with TP53 and blocks its activity probably by blocking its binding to DNA. Interacts with the Ku 70 kDa subunit of ds-DNA kinase. Interacts with PTTG1IP. Post-translationally, phosphorylated at Ser-165 by CDK1 during mitosis. In terms of processing, phosphorylated in vitro by ds-DNA kinase. Ubiquitinated through 'Lys-11' linkage of ubiquitin moieties by the anaphase promoting complex (APC) at the onset of anaphase, conducting to its degradation. 'Lys-11'-linked ubiquitination is mediated by the E2 ligase UBE2C/UBCH10.

Its subcellular location is the cytoplasm. It localises to the nucleus. Its function is as follows. Regulatory protein, which plays a central role in chromosome stability, in the p53/TP53 pathway, and DNA repair. Probably acts by blocking the action of key proteins. During the mitosis, it blocks Separase/ESPL1 function, preventing the proteolysis of the cohesin complex and the subsequent segregation of the chromosomes. At the onset of anaphase, it is ubiquitinated, conducting to its destruction and to the liberation of ESPL1. Its function is however not limited to a blocking activity, since it is required to activate ESPL1. Negatively regulates the transcriptional activity and related apoptosis activity of TP53. The negative regulation of TP53 may explain the strong transforming capability of the protein when it is overexpressed. May also play a role in DNA repair via its interaction with Ku, possibly by connecting DNA damage-response pathways with sister chromatid separation. The protein is Securin (PTTG1) of Bos taurus (Bovine).